Reading from the N-terminus, the 102-residue chain is Aspartyl/glutamyl-tRNA(Asn/Gln) amidotransferase subunit C (102 aa).

Belongs to the GatC family. In terms of assembly, heterotrimer of A, B and C subunits.

The enzyme catalyses L-glutamyl-tRNA(Gln) + L-glutamine + ATP + H2O = L-glutaminyl-tRNA(Gln) + L-glutamate + ADP + phosphate + H(+). It catalyses the reaction L-aspartyl-tRNA(Asn) + L-glutamine + ATP + H2O = L-asparaginyl-tRNA(Asn) + L-glutamate + ADP + phosphate + 2 H(+). Functionally, allows the formation of correctly charged Asn-tRNA(Asn) or Gln-tRNA(Gln) through the transamidation of misacylated Asp-tRNA(Asn) or Glu-tRNA(Gln) in organisms which lack either or both of asparaginyl-tRNA or glutaminyl-tRNA synthetases. The reaction takes place in the presence of glutamine and ATP through an activated phospho-Asp-tRNA(Asn) or phospho-Glu-tRNA(Gln). The protein is Aspartyl/glutamyl-tRNA(Asn/Gln) amidotransferase subunit C of Lactobacillus acidophilus (strain ATCC 700396 / NCK56 / N2 / NCFM).